Reading from the N-terminus, the 92-residue chain is Small ribosomal subunit protein bS20 (92 aa).

Residues 1 to 24 form a disordered region; the sequence is MANSAQARKRARQAAKANSHNSAL.

This sequence belongs to the bacterial ribosomal protein bS20 family.

Functionally, binds directly to 16S ribosomal RNA. The sequence is that of Small ribosomal subunit protein bS20 from Paraburkholderia xenovorans (strain LB400).